Reading from the N-terminus, the 738-residue chain is Ribosomal RNA large subunit methyltransferase K/L (738 aa).

The THUMP domain maps to 46 to 157; that stretch reads TAYRVCLWSR…ADQAVIGLDL (112 aa).

This sequence belongs to the methyltransferase superfamily. RlmKL family.

The protein resides in the cytoplasm. The enzyme catalyses guanosine(2445) in 23S rRNA + S-adenosyl-L-methionine = N(2)-methylguanosine(2445) in 23S rRNA + S-adenosyl-L-homocysteine + H(+). The catalysed reaction is guanosine(2069) in 23S rRNA + S-adenosyl-L-methionine = N(2)-methylguanosine(2069) in 23S rRNA + S-adenosyl-L-homocysteine + H(+). Its function is as follows. Specifically methylates the guanine in position 2445 (m2G2445) and the guanine in position 2069 (m7G2069) of 23S rRNA. The protein is Ribosomal RNA large subunit methyltransferase K/L of Methylococcus capsulatus (strain ATCC 33009 / NCIMB 11132 / Bath).